The sequence spans 91 residues: Cytochrome b-c1 complex subunit 6, mitochondrial (91 aa).

The span at 1–10 shows a compositional bias: basic and acidic residues; it reads MGLEDERKML. A mitochondrion-targeting transit peptide spans 1 to 13; sequence MGLEDERKMLTES. Residues 1-30 form a disordered region; that stretch reads MGLEDERKMLTESGDPEKEEEEEEELVDPL. The segment covering 17–27 has biased composition (acidic residues); it reads EKEEEEEEELV. 2 cysteine pairs are disulfide-bonded: Cys37-Cys81 and Cys53-Cys67. Lys42 carries the N6-acetyllysine modification. Lys85 is modified (N6-acetyllysine).

This sequence belongs to the UQCRH/QCR6 family. In terms of assembly, component of the ubiquinol-cytochrome c oxidoreductase (cytochrome b-c1 complex, complex III, CIII), a multisubunit enzyme composed of 11 subunits. The complex is composed of 3 respiratory subunits cytochrome b, cytochrome c1 and Rieske protein UQCRFS1, 2 core protein subunits UQCRC1/QCR1 and UQCRC2/QCR2, and 6 low-molecular weight protein subunits UQCRH/QCR6, UQCRB/QCR7, UQCRQ/QCR8, UQCR10/QCR9, UQCR11/QCR10 and subunit 9, the cleavage product of Rieske protein UQCRFS1. The complex exists as an obligatory dimer and forms supercomplexes (SCs) in the inner mitochondrial membrane with NADH-ubiquinone oxidoreductase (complex I, CI) and cytochrome c oxidase (complex IV, CIV), resulting in different assemblies (supercomplex SCI(1)III(2)IV(1) and megacomplex MCI(2)III(2)IV(2)).

The protein resides in the mitochondrion inner membrane. Component of the ubiquinol-cytochrome c oxidoreductase, a multisubunit transmembrane complex that is part of the mitochondrial electron transport chain which drives oxidative phosphorylation. The respiratory chain contains 3 multisubunit complexes succinate dehydrogenase (complex II, CII), ubiquinol-cytochrome c oxidoreductase (cytochrome b-c1 complex, complex III, CIII) and cytochrome c oxidase (complex IV, CIV), that cooperate to transfer electrons derived from NADH and succinate to molecular oxygen, creating an electrochemical gradient over the inner membrane that drives transmembrane transport and the ATP synthase. The cytochrome b-c1 complex catalyzes electron transfer from ubiquinol to cytochrome c, linking this redox reaction to translocation of protons across the mitochondrial inner membrane, with protons being carried across the membrane as hydrogens on the quinol. In the process called Q cycle, 2 protons are consumed from the matrix, 4 protons are released into the intermembrane space and 2 electrons are passed to cytochrome c. The sequence is that of Cytochrome b-c1 complex subunit 6, mitochondrial (UQCRH) from Macaca fascicularis (Crab-eating macaque).